The chain runs to 434 residues: D-amino acid dehydrogenase (434 aa).

Position 3–17 (3–17 (VVILGSGVVGVASAW)) interacts with FAD.

It belongs to the DadA oxidoreductase family. Requires FAD as cofactor.

The catalysed reaction is a D-alpha-amino acid + A + H2O = a 2-oxocarboxylate + AH2 + NH4(+). It functions in the pathway amino-acid degradation; D-alanine degradation; NH(3) and pyruvate from D-alanine: step 1/1. Oxidative deamination of D-amino acids. This chain is D-amino acid dehydrogenase, found in Serratia proteamaculans (strain 568).